The primary structure comprises 98 residues: ATP-dependent Clp protease adapter protein ClpS (98 aa).

It belongs to the ClpS family. Binds to the N-terminal domain of the chaperone ClpA.

Its function is as follows. Involved in the modulation of the specificity of the ClpAP-mediated ATP-dependent protein degradation. The polypeptide is ATP-dependent Clp protease adapter protein ClpS (Synechocystis sp. (strain ATCC 27184 / PCC 6803 / Kazusa)).